Consider the following 131-residue polypeptide: uncharacterized protein (131 aa).

Residues Val17–Leu39 traverse the membrane as a helical segment.

It localises to the membrane. This is an uncharacterized protein from Archaeoglobus fulgidus (strain ATCC 49558 / DSM 4304 / JCM 9628 / NBRC 100126 / VC-16).